The chain runs to 967 residues: RNA polymerase-associated protein RapA (967 aa).

The Helicase ATP-binding domain maps to 163–337 (EVGQRTAPRV…FARLSLLDPD (175 aa)). 176-183 (DEVGLGKT) contacts ATP. The DEAH box signature appears at 283–286 (DEAH). The Helicase C-terminal domain maps to 489-660 (RLEWLITFLK…KFLQNPTALE (172 aa)).

It belongs to the SNF2/RAD54 helicase family. RapA subfamily. As to quaternary structure, interacts with the RNAP. Has a higher affinity for the core RNAP than for the holoenzyme. Its ATPase activity is stimulated by binding to RNAP.

In terms of biological role, transcription regulator that activates transcription by stimulating RNA polymerase (RNAP) recycling in case of stress conditions such as supercoiled DNA or high salt concentrations. Probably acts by releasing the RNAP, when it is trapped or immobilized on tightly supercoiled DNA. Does not activate transcription on linear DNA. Probably not involved in DNA repair. This is RNA polymerase-associated protein RapA from Pasteurella multocida (strain Pm70).